Here is an 81-residue protein sequence, read N- to C-terminus: Cytochrome b559 subunit alpha (81 aa).

The chain crosses the membrane as a helical span at residues 21–35; sequence IIHSITIPMLFIAGW. His-23 contacts heme.

It belongs to the PsbE/PsbF family. Heterodimer of an alpha subunit and a beta subunit. PSII is composed of 1 copy each of membrane proteins PsbA, PsbB, PsbC, PsbD, PsbE, PsbF, PsbH, PsbI, PsbJ, PsbK, PsbL, PsbM, PsbT, PsbX, PsbY, PsbZ, Psb30/Ycf12, peripheral proteins PsbO, CyanoQ (PsbQ), PsbU, PsbV and a large number of cofactors. It forms dimeric complexes. It depends on heme b as a cofactor.

The protein resides in the cellular thylakoid membrane. Its function is as follows. This b-type cytochrome is tightly associated with the reaction center of photosystem II (PSII). PSII is a light-driven water:plastoquinone oxidoreductase that uses light energy to abstract electrons from H(2)O, generating O(2) and a proton gradient subsequently used for ATP formation. It consists of a core antenna complex that captures photons, and an electron transfer chain that converts photonic excitation into a charge separation. This is Cytochrome b559 subunit alpha from Microcystis aeruginosa (strain NIES-843 / IAM M-2473).